The primary structure comprises 99 residues: Acylphosphatase-1 (99 aa).

N-acetylalanine is present on Ala-2. In terms of domain architecture, Acylphosphatase-like spans 9 to 99 (SVDYEIFGKV…LDYSDFQIVK (91 aa)). Catalysis depends on residues Arg-24 and Asn-42.

This sequence belongs to the acylphosphatase family.

It catalyses the reaction an acyl phosphate + H2O = a carboxylate + phosphate + H(+). The sequence is that of Acylphosphatase-1 (Acyp1) from Mus musculus (Mouse).